A 247-amino-acid chain; its full sequence is Centromere protein H (247 aa).

Residue M1 is modified to N-acetylmethionine. A compositionally biased stretch (acidic residues) spans 1–14 (MEEQPQMQDADEPA). A disordered region spans residues 1–34 (MEEQPQMQDADEPADSGGEGRAGGPPQVAGAQAA). S16 carries the phosphoserine modification. Residues 24–34 (GPPQVAGAQAA) are compositionally biased toward low complexity. A coiled-coil region spans residues 47–192 (RAQTKQQLLE…KIDLDSMENS (146 aa)). K67 participates in a covalent cross-link: Glycyl lysine isopeptide (Lys-Gly) (interchain with G-Cter in SUMO2). Residue T68 is modified to Phosphothreonine.

The protein belongs to the CENP-H/MCM16 family. Self-associates. Component of the CENPA-NAC complex, at least composed of CENPA, CENPC, CENPH, CENPM, CENPN, CENPT and CENPU. The CENPA-NAC complex interacts with the CENPA-CAD complex, composed of CENPI, CENPK, CENPL, CENPO, CENPP, CENPQ, CENPR and CENPS. Interacts directly with CENPK. Interacts with KIF2C and NDC80. Interacts with TRIM36.

It is found in the nucleus. It localises to the chromosome. Its subcellular location is the centromere. The protein resides in the kinetochore. Its function is as follows. Component of the CENPA-NAC (nucleosome-associated) complex, a complex that plays a central role in assembly of kinetochore proteins, mitotic progression and chromosome segregation. The CENPA-NAC complex recruits the CENPA-CAD (nucleosome distal) complex and may be involved in incorporation of newly synthesized CENPA into centromeres. Required for chromosome congression and efficiently align the chromosomes on a metaphase plate. This chain is Centromere protein H, found in Homo sapiens (Human).